A 1113-amino-acid polypeptide reads, in one-letter code: MGRVSFSVRVSSVRRARCSCPGRCYLSCRVPPTTALRALNGLGCAGVPGETAGGAVGPGPLGTRGFLSGSKFQAPGSWKDCFGAPPAPDVLRADRSVGEGCPQKLVTANLLRFLLLVLIPCICALIVLLAILLSFVGTLKRVYFKSNDSEPLVTDGEARVPGVIPVNTVYYENTGAPSLPPSQSTPAWTPRAPSPEDQSHRNTSTCMNITHSQCQILPYHSTLAPLLPIVKNMDMEKFLKFFTYLHRLSCYQHILLFGCSLAFPECVVDGDDRHGLLPCRSFCEAAKEGCESVLGMVNSSWPDSLRCSQFRDHTETNSSVRKSCFSLQQEHGKQSLCGGGESFLCTSGLCVPKKLQCNGYNDCDDWSDEAHCNCSKDLFHCGTGKCLHYSLLCDGYDDCGDLSDEQNCDCNLTKEHRCGDGRCIAAEWVCDGDHDCVDKSDEVNCSCHSQGLVECRSGQCIPSTFQCDGDEDCKDGSDEENCSDSQTPCPEGEQGCLGSSCVESCAGSSLCDSDSSLSNCSQCEPITLELCMNLPYNHTHYPNYLGHRTQKEASISWESSLFPALVQTNCYKYLMFFACTILVPKCDVNTGQRIPPCRLLCEHSKERCESVLGIVGLQWPEDTDCNQFPEESSDNQTCLLPNEDVEECSPSHFKCRSGRCVLGSRRCDGQADCDDDSDEENCGCKERALWECPFNKQCLKHTLICDGFPDCPDSMDEKNCSFCQDNELECANHECVPRDLWCDGWVDCSDSSDEWGCVTLSKNGNSSSLLTVHKSAKEHHVCADGWRETLSQLACKQMGLGEPSVTKLIPGQEGQQWLRLYPNWENLNGSTLQELLVYRHSCPSRSEISLLCSKQDCGRRPAARMNKRILGGRTSRPGRWPWQCSLQSEPSGHICGCVLIAKKWVLTVAHCFEGREDADVWKVVFGINNLDHPSGFMQTRFVKTILLHPRYSRAVVDYDISVVELSDDINETSYVRPVCLPSPEEYLEPDTYCYITGWGHMGNKMPFKLQEGEVRIIPLEQCQSYFDMKTITNRMICAGYESGTVDSCMGDSGGPLVCERPGGQWTLFGLTSWGSVCFSKVLGPGVYSNVSYFVGWIERQIYIQTFLQKKSQG.

Over 1–112 (MGRVSFSVRV…QKLVTANLLR (112 aa)) the chain is Cytoplasmic. A helical; Signal-anchor for type II membrane protein transmembrane segment spans residues 113-133 (FLLLVLIPCICALIVLLAILL). At 134 to 1113 (SFVGTLKRVY…QTFLQKKSQG (980 aa)) the chain is on the extracellular side. 3 N-linked (GlcNAc...) asparagine glycosylation sites follow: asparagine 147, asparagine 202, and asparagine 208. Residues 176 to 202 (APSLPPSQSTPAWTPRAPSPEDQSHRN) form a disordered region. Residues 201–327 (RNTSTCMNIT…SSVRKSCFSL (127 aa)) form the FZ 1 domain. Disulfide bonds link cysteine 206/cysteine 266, cysteine 214/cysteine 259, cysteine 250/cysteine 290, cysteine 279/cysteine 324, cysteine 283/cysteine 307, cysteine 337/cysteine 350, cysteine 345/cysteine 363, and cysteine 357/cysteine 372. Residues asparagine 298 and asparagine 317 are each glycosylated (N-linked (GlcNAc...) asparagine). LDL-receptor class A domains follow at residues 336 to 372 (LCGG…EAHC), 373 to 408 (NCSK…EQNC), 409 to 445 (DCNL…EVNC), and 446 to 483 (SCHS…ENCS). Asparagine 373 carries N-linked (GlcNAc...) asparagine glycosylation. Intrachain disulfides connect cysteine 374–cysteine 386, cysteine 381–cysteine 399, cysteine 393–cysteine 408, cysteine 410–cysteine 423, cysteine 418–cysteine 436, cysteine 430–cysteine 445, cysteine 447–cysteine 460, cysteine 455–cysteine 473, and cysteine 467–cysteine 482. N-linked (GlcNAc...) asparagine glycosylation is present at asparagine 411. N-linked (GlcNAc...) asparagine glycosylation is present at asparagine 444. N-linked (GlcNAc...) asparagine glycosylation is found at asparagine 481, asparagine 519, and asparagine 537. Residues 518-641 (SNCSQCEPIT…SSDNQTCLLP (124 aa)) form the FZ 2 domain. 14 disulfide bridges follow: cysteine 523–cysteine 586, cysteine 531–cysteine 579, cysteine 570–cysteine 608, cysteine 597–cysteine 638, cysteine 601–cysteine 625, cysteine 648–cysteine 660, cysteine 655–cysteine 673, cysteine 667–cysteine 682, cysteine 684–cysteine 698, cysteine 692–cysteine 711, cysteine 705–cysteine 720, cysteine 723–cysteine 735, cysteine 730–cysteine 748, and cysteine 742–cysteine 757. N-linked (GlcNAc...) asparagine glycosylation is present at asparagine 635. 3 LDL-receptor class A domains span residues 647-682 (ECSP…EENC), 683-721 (GCKE…KNCS), and 722-757 (FCQD…EWGC). The N-linked (GlcNAc...) asparagine glycan is linked to asparagine 719. Positions 758–853 (VTLSKNGNSS…SRSEISLLCS (96 aa)) constitute an SRCR domain. Residues asparagine 765 and asparagine 828 are each glycosylated (N-linked (GlcNAc...) asparagine). 6 disulfides stabilise this stretch: cysteine 782-cysteine 884, cysteine 857-cysteine 979, cysteine 895-cysteine 911, cysteine 993-cysteine 1058, cysteine 1022-cysteine 1037, and cysteine 1048-cysteine 1077. The region spanning 869-1102 (ILGGRTSRPG…FVGWIERQIY (234 aa)) is the Peptidase S1 domain. Residues histidine 910 and aspartate 959 each act as charge relay system in the active site. Asparagine 970 is a glycosylation site (N-linked (GlcNAc...) asparagine). The active-site Charge relay system is the serine 1052. N-linked (GlcNAc...) asparagine glycosylation occurs at asparagine 1089.

The protein belongs to the peptidase S1 family. N-glycosylated; required for processing and activation. Post-translationally, activated through proteolytic processing by a trypsin-like protease; cleaved into a N-terminal propeptide and an activated corin protease fragment. Atrial natriuretic peptide-converting enzyme, 180 kDa soluble fragment is produced by cleavage by ADAM10. Cleavage by ADAM10 to produce soluble 180 kDa soluble fragment takes place after the transmembrane region and before FZ 1. In terms of processing, a disulfide bond links the activated corin protease fragment and the N-terminal propeptide. The disulfide bond also links the activated corin protease fragment with Atrial natriuretic peptide-converting enzyme, 180 kDa soluble fragment. Highly expressed in heart. Also expressed in pregnant uterus.

The protein resides in the cell membrane. The protein localises to the secreted. In terms of biological role, serine-type endopeptidase involved in atrial natriuretic peptide (NPPA) processing. Converts through proteolytic cleavage the non-functional propeptide NPPA into the active hormone, thereby regulating blood pressure in heart and promoting natriuresis, diuresis and vasodilation. Proteolytic cleavage of pro-NPPA also plays a role in female pregnancy by promoting trophoblast invasion and spiral artery remodeling in uterus. Also acts as a regulator of sodium reabsorption in kidney. May also process pro-NPPB the B-type natriuretic peptide. The chain is Atrial natriuretic peptide-converting enzyme (Corin) from Mus musculus (Mouse).